Here is a 1415-residue protein sequence, read N- to C-terminus: DNA-directed RNA polymerase subunit beta' (1415 aa).

The Zn(2+) site is built by Cys-72, Cys-74, Cys-87, and Cys-90. 3 residues coordinate Mg(2+): Asp-463, Asp-465, and Asp-467. Zn(2+)-binding residues include Cys-811, Cys-885, Cys-892, and Cys-895.

This sequence belongs to the RNA polymerase beta' chain family. The RNAP catalytic core consists of 2 alpha, 1 beta, 1 beta' and 1 omega subunit. When a sigma factor is associated with the core the holoenzyme is formed, which can initiate transcription. The cofactor is Mg(2+). Zn(2+) serves as cofactor.

It catalyses the reaction RNA(n) + a ribonucleoside 5'-triphosphate = RNA(n+1) + diphosphate. DNA-dependent RNA polymerase catalyzes the transcription of DNA into RNA using the four ribonucleoside triphosphates as substrates. In Cereibacter sphaeroides (strain ATCC 17029 / ATH 2.4.9) (Rhodobacter sphaeroides), this protein is DNA-directed RNA polymerase subunit beta'.